The sequence spans 284 residues: Dihydropteroate synthase (284 aa).

Positions 6-265 (VQVIGVLNVT…DVRASVDALK (260 aa)) constitute a Pterin-binding domain. Position 13 (N13) interacts with Mg(2+). (7,8-dihydropterin-6-yl)methyl diphosphate is bound by residues T53, D86, N105, D177, K213, and 253 to 255 (RVH).

This sequence belongs to the DHPS family. Homodimer. Mg(2+) serves as cofactor.

It catalyses the reaction (7,8-dihydropterin-6-yl)methyl diphosphate + 4-aminobenzoate = 7,8-dihydropteroate + diphosphate. The protein operates within cofactor biosynthesis; tetrahydrofolate biosynthesis; 7,8-dihydrofolate from 2-amino-4-hydroxy-6-hydroxymethyl-7,8-dihydropteridine diphosphate and 4-aminobenzoate: step 1/2. Is potently inhibited by the sulfone dapsone and the two sulfonamides sulfamethoxazole and sulfamethoxypyridazine, with Kis in the range of 12 to 32 nM. To a lesser extent, is also inhibited by p-aminosalicylate (PAS). In terms of biological role, catalyzes the condensation of para-aminobenzoate (pABA) with 6-hydroxymethyl-7,8-dihydropterin diphosphate (DHPt-PP) to form 7,8-dihydropteroate, the immediate precursor of folate derivatives. The protein is Dihydropteroate synthase (folP1) of Mycobacterium leprae (strain TN).